Here is a 275-residue protein sequence, read N- to C-terminus: 2-dehydro-3-deoxyphosphooctonate aldolase (275 aa).

Belongs to the KdsA family.

It localises to the cytoplasm. The enzyme catalyses D-arabinose 5-phosphate + phosphoenolpyruvate + H2O = 3-deoxy-alpha-D-manno-2-octulosonate-8-phosphate + phosphate. It functions in the pathway carbohydrate biosynthesis; 3-deoxy-D-manno-octulosonate biosynthesis; 3-deoxy-D-manno-octulosonate from D-ribulose 5-phosphate: step 2/3. Its pathway is bacterial outer membrane biogenesis; lipopolysaccharide biosynthesis. This chain is 2-dehydro-3-deoxyphosphooctonate aldolase, found in Protochlamydia amoebophila (strain UWE25).